The primary structure comprises 501 residues: Alveolysin (501 aa).

The first 32 residues, 1–32 (MKKKSNHLKGRKVLVSLLVSLQVFAFASISSA), serve as a signal peptide directing secretion. 4 consecutive transmembrane segments (beta stranded) span residues 191–204 (QNQISSALNVNAKV), 211–220 (IDFNAVANGE), 289–298 (SNDVQTAFKL), and 306–318 (QASGQYKDIYENS). The Conserved undecapeptide signature appears at 460-470 (ECTGLAWEWWR). Positions 492-493 (TL) match the Cholesterol binding motif.

This sequence belongs to the cholesterol-dependent cytolysin family. As to quaternary structure, homooligomeric pore complex of 35 to 50 subunits; when inserted in the host membrane.

It is found in the secreted. The protein localises to the host cell membrane. Its activity is regulated as follows. Inhibited by cholesterol and thiol reagents. In terms of biological role, a cholesterol-dependent toxin that causes cytolysis by forming pores in cholesterol containing host membranes. After binding to target membranes, the protein undergoes a major conformation change, leading to its insertion in the host membrane and formation of an oligomeric pore complex. Cholesterol is required for binding to host cell membranes, membrane insertion and pore formation; cholesterol binding is mediated by a Thr-Leu pair in the C-terminus. Can be reversibly inactivated by oxidation. The chain is Alveolysin (alv) from Paenibacillus alvei (Bacillus alvei).